The primary structure comprises 500 residues: Probable zinc metalloprotease MGYG_02393 (500 aa).

A signal peptide spans 1 to 24; that stretch reads MHLSMGGLLPGLALLASANALALA. 3 N-linked (GlcNAc...) asparagine glycosylation sites follow: asparagine 61, asparagine 103, and asparagine 124. Positions 174, 194, and 230 each coordinate Zn(2+). Asparagine 245 is a glycosylation site (N-linked (GlcNAc...) asparagine). Zn(2+) is bound at residue aspartate 257. The Fibronectin type-III domain maps to 414–500; that stretch reads MPRNVRVNTS…ERGVAVLPFP (87 aa). Asparagine 421 and asparagine 427 each carry an N-linked (GlcNAc...) asparagine glycan.

This sequence belongs to the peptidase M28 family. M28B subfamily. Zn(2+) is required as a cofactor.

It localises to the secreted. The sequence is that of Probable zinc metalloprotease MGYG_02393 from Arthroderma gypseum (strain ATCC MYA-4604 / CBS 118893) (Microsporum gypseum).